The sequence spans 2412 residues: Centrosomal protein of 295 kDa (2412 aa).

The interval 1-540 (MKRKGMNTKL…KQADQPEVCC (540 aa)) is necessary for centriole targeting and microtubule association. The residue at position 13 (Ser-13) is a Phosphoserine. Coiled-coil stretches lie at residues 63–84 (AEEL…LEKL), 114–134 (AERK…QKNQ), 209–273 (DAHL…DLAR), 489–535 (RRKQ…QADQ), and 563–592 (HQLL…VLKE). Disordered stretches follow at residues 600-641 (SALV…YQPV) and 739-762 (LDSQ…PSPF). Ser-634 is modified (phosphoserine). Over residues 739-757 (LDSQQISSEDSENISSKPS) the composition is skewed to polar residues. The stretch at 811-841 (AQQGDLRFLQEQLELQKKVLQARQEAREKLL) forms a coiled coil. Disordered regions lie at residues 871-891 (SASA…ATVS), 973-1005 (DTQS…QDGS), 1158-1178 (LSSP…SVRS), and 1216-1240 (WVDT…QQTG). 3 stretches are compositionally biased toward polar residues: residues 993–1005 (PSQS…QDGS), 1158–1176 (LSSP…SVSV), and 1224–1240 (FQSS…QQTG). Coiled coils occupy residues 1300 to 1327 (QQDS…EAHE) and 1448 to 1493 (QHDD…SKQI). The residue at position 1573 (Ser-1573) is a Phosphoserine. Disordered regions lie at residues 1820 to 1895 (LAHD…LSSV), 1916 to 1937 (ESFS…EETD), 2028 to 2048 (DLSS…SESS), and 2089 to 2111 (TEGS…SQHA). A compositionally biased stretch (basic and acidic residues) spans 1836–1868 (SKSHDDNAEAVKVKKSDVEDHAVLSHAVSKEEA). The span at 1885–1895 (QEISQEPLSSV) shows a compositional bias: polar residues. The span at 1921–1935 (QTEHLEQESTNKQEE) shows a compositional bias: basic and acidic residues. The segment covering 2089–2108 (TEGSEQSFQQLRPEFSSQES) has biased composition (polar residues). An ALMS motif region spans residues 2367 to 2412 (SLQEAFMTRQTLTERSYQRQREIWNKTRLPQTKVSKEKLPTGCTGS).

Interacts (via ALMS motif) with microtubules; this interaction is direct.

Its subcellular location is the cytoplasm. The protein localises to the cytoskeleton. It localises to the microtubule organizing center. The protein resides in the centrosome. It is found in the centriole. Its subcellular location is the spindle. Its function is as follows. Centriole-enriched microtubule-binding protein involved in centriole biogenesis. Essential for the generation of the distal portion of new-born centrioles in a CPAP- and CEP120-mediated elongation dependent manner during the cell cycle S/G2 phase after formation of the initiating cartwheel structure. Required for the recruitment of centriolar proteins, such as POC1B, POC5 and CEP135, into the distal portion of centrioles. Also required for centriole-to-centrosome conversion during mitotic progression, but is dispensable for cartwheel removal or centriole disengagement. Binds to and stabilizes centriolar microtubule. May be involved in ciliogenesis. The polypeptide is Centrosomal protein of 295 kDa (Mus musculus (Mouse)).